A 183-amino-acid chain; its full sequence is Ribosome maturation factor RimM (183 aa).

The region spanning 96-171 (PDEFYDHELE…VALIDPPEGL (76 aa)) is the PRC barrel domain.

The protein belongs to the RimM family. Binds ribosomal protein uS19.

The protein localises to the cytoplasm. Its function is as follows. An accessory protein needed during the final step in the assembly of 30S ribosomal subunit, possibly for assembly of the head region. Essential for efficient processing of 16S rRNA. May be needed both before and after RbfA during the maturation of 16S rRNA. It has affinity for free ribosomal 30S subunits but not for 70S ribosomes. This chain is Ribosome maturation factor RimM, found in Rhodococcus jostii (strain RHA1).